Consider the following 219-residue polypeptide: Oxaloacetate tautomerase YcgM (219 aa).

Residues glutamate 70, glutamate 72, and aspartate 101 each contribute to the Mg(2+) site.

This sequence belongs to the FAH family. Requires a divalent metal cation as cofactor.

It catalyses the reaction oxaloacetate = enol-oxaloacetate. In terms of biological role, tautomerase that converts enol-oxaloacetate to the keto form of oxaloacetate. In Escherichia coli (strain K12), this protein is Oxaloacetate tautomerase YcgM.